The following is a 320-amino-acid chain: Mitochondrial thiamine pyrophosphate carrier (320 aa).

Solcar repeat units follow at residues 13 to 106 (NTKF…LTEL), 116 to 202 (REFS…LKHL), and 214 to 309 (NENL…FCNV). A helical transmembrane segment spans residues 19–39 (AVAGSVSGLVTRALISPFDVI). A Phosphoserine modification is found at Ser51. The next 4 membrane-spanning stretches (helical) occupy residues 87-107 (ILSIGYGAVQFLSFEMLTELV), 122-142 (FVCGGLAACMATLTVHPVDVL), 173-193 (VFYKGLAPTLIAIFPYAGLQF), and 220-240 (LLCGSGAGVISKTLTYPLDLF). A Substrate recognition motif is present at residues 241–246 (KKRLQV). The helical transmembrane segment at 293-313 (ALSTGFMFFSYEFFCNVFHCM) threads the bilayer.

The protein belongs to the mitochondrial carrier (TC 2.A.29) family. In terms of tissue distribution, expressed in all tissues examined except for placenta. Highest levels in colon, kidney, lung, testis, spleen, and brain.

The protein resides in the mitochondrion membrane. The catalysed reaction is thiamine phosphate(out) + thiamine diphosphate(in) = thiamine phosphate(in) + thiamine diphosphate(out). In terms of biological role, mitochondrial transporter mediating uptake of thiamine diphosphate into mitochondria. It is not clear if the antiporter activity is affected by the membrane potential or by the proton electrochemical gradient. This chain is Mitochondrial thiamine pyrophosphate carrier, found in Homo sapiens (Human).